A 485-amino-acid chain; its full sequence is Peroxisomal catalase (485 aa).

Active-site residues include H53 and N126. Y336 serves as a coordination point for heme.

This sequence belongs to the catalase family. As to quaternary structure, homotetramer. The cofactor is heme.

Its subcellular location is the peroxisome matrix. It catalyses the reaction 2 H2O2 = O2 + 2 H2O. In terms of biological role, catalyzes the degradation of hydrogen peroxide (H(2)O(2)) generated by peroxisomal oxidases to water and oxygen, thereby protecting cells from the toxic effects of hydrogen peroxide. This Candida albicans (strain SC5314 / ATCC MYA-2876) (Yeast) protein is Peroxisomal catalase (CAT1).